We begin with the raw amino-acid sequence, 455 residues long: Adhesin YadA (455 aa).

Residues Met-1–Ala-25 form the signal peptide. Residues Asp-26–Tyr-363 form a surface exposed passenger domain region. A coiled-coil region spans residues Val-209–Lys-243. Residues Thr-364 to Gly-402 form an outer membrane translocation of the passenger domain region. The next 4 beta stranded transmembrane spans lie at Gly-402–Gly-412, Ser-416–Val-427, Lys-434–Ala-440, and Asp-444–Trp-455. Residues Lys-403–Trp-455 are translocator domain.

This sequence belongs to the autotransporter-2 (AT-2) (TC 1.B.40) family. Homotrimer; in gels migrates as monomers, dimers and homotrimers. Does not form trimers with distantly related EibA from E.coli; coexpression was lethal and one of the genes is eliminated in vivo. If the full translocator domain (368-455) is exchanged with that of EibA ('299-392'), will form heterotrimers with EibA and vice-versa.

The protein localises to the cell surface. The protein resides in the cell outer membrane. Its function is as follows. Collagen-binding outer membrane protein forming a fibrillar matrix on the bacterial cell surface. Promotes initial attachment and invasion of eukaryotic cells. Also protects the bacteria by being responsible for agglutination, serum resistance, complement inactivation and phagocytosis resistance. The chain is Adhesin YadA (yadA) from Yersinia enterocolitica.